Here is a 418-residue protein sequence, read N- to C-terminus: MKAEIIAVGTEILTGQIVNTNAQFLSEKLAEIGVDVYFQTAVGDNEVRLLSLLEIASQRSSLVILTGGLGPTEDDLTKQTLAKFLGKALVFDPQAQEKLDIFFALRPDYARTPNNERQAQIVEGAIPLPNETGLAVGGKLEVDGVTYVVLPGPPSELKPMVLNQLLPKLMTGSKLYSRVLRFFGIGESQLVTILADLIDNQIDPTLAPYAKTGEVTLRLSTKASSQEEANQALDILENQILDCQTFEGISLRDFCYGYGEETSLASIVVEELKRQGKTIAAAESLTAGLFQATVANFSGVSSIFKGGFVTYSLEEKSRMLDIPAKNLEEHGVVSEFTAQKMAEQARSKTQSDFGISLTGVAGPDSLEGHPVGTVFIGLAQEQGTEVIKVNIGGRSRADVRHIAVMHAFNLVRKALLSD.

Belongs to the CinA family.

This Streptococcus pneumoniae (strain JJA) protein is Putative competence-damage inducible protein.